The sequence spans 495 residues: ATP synthase subunit beta, chloroplastic (495 aa).

ATP is bound at residue 172–179; the sequence is GGAGVGKT.

The protein belongs to the ATPase alpha/beta chains family. In terms of assembly, F-type ATPases have 2 components, CF(1) - the catalytic core - and CF(0) - the membrane proton channel. CF(1) has five subunits: alpha(3), beta(3), gamma(1), delta(1), epsilon(1). CF(0) has four main subunits: a(1), b(1), b'(1) and c(9-12).

Its subcellular location is the plastid. The protein resides in the chloroplast thylakoid membrane. It carries out the reaction ATP + H2O + 4 H(+)(in) = ADP + phosphate + 5 H(+)(out). In terms of biological role, produces ATP from ADP in the presence of a proton gradient across the membrane. The catalytic sites are hosted primarily by the beta subunits. This chain is ATP synthase subunit beta, chloroplastic, found in Barnardia japonica (Chinese squill).